The primary structure comprises 308 residues: Ribonuclease Z (308 aa).

7 residues coordinate Zn(2+): His61, His63, Asp65, His66, His139, Asp210, and His268. The Proton acceptor role is filled by Asp65.

The protein belongs to the RNase Z family. As to quaternary structure, homodimer. It depends on Zn(2+) as a cofactor.

The catalysed reaction is Endonucleolytic cleavage of RNA, removing extra 3' nucleotides from tRNA precursor, generating 3' termini of tRNAs. A 3'-hydroxy group is left at the tRNA terminus and a 5'-phosphoryl group is left at the trailer molecule.. Zinc phosphodiesterase, which displays some tRNA 3'-processing endonuclease activity. Probably involved in tRNA maturation, by removing a 3'-trailer from precursor tRNA. The polypeptide is Ribonuclease Z (Natronomonas pharaonis (strain ATCC 35678 / DSM 2160 / CIP 103997 / JCM 8858 / NBRC 14720 / NCIMB 2260 / Gabara) (Halobacterium pharaonis)).